A 500-amino-acid polypeptide reads, in one-letter code: Probable cytosol aminopeptidase (500 aa).

Mn(2+)-binding residues include Lys-264 and Asp-269. Lys-276 is a catalytic residue. Mn(2+) contacts are provided by Asp-287, Asp-346, and Glu-348. The active site involves Arg-350.

Belongs to the peptidase M17 family. Mn(2+) is required as a cofactor.

The protein localises to the cytoplasm. The catalysed reaction is Release of an N-terminal amino acid, Xaa-|-Yaa-, in which Xaa is preferably Leu, but may be other amino acids including Pro although not Arg or Lys, and Yaa may be Pro. Amino acid amides and methyl esters are also readily hydrolyzed, but rates on arylamides are exceedingly low.. It carries out the reaction Release of an N-terminal amino acid, preferentially leucine, but not glutamic or aspartic acids.. Its function is as follows. Presumably involved in the processing and regular turnover of intracellular proteins. Catalyzes the removal of unsubstituted N-terminal amino acids from various peptides. In Rhodopseudomonas palustris (strain ATCC BAA-98 / CGA009), this protein is Probable cytosol aminopeptidase.